A 334-amino-acid polypeptide reads, in one-letter code: Putative heat shock protein HSP 90-alpha A5 (334 aa).

The disordered stretch occupies residues 55–107 (KRNKQVSDAEAEKKEDKRKKKKESNDKPEIEDVGSDEEEEKKDADKKKKKSKE). The segment covering 59–69 (QVSDAEAEKKE) has biased composition (basic and acidic residues). The span at 85-94 (EDVGSDEEEE) shows a compositional bias: acidic residues. Serine 89 carries the phosphoserine modification. Residues 234 to 267 (LELPEDEEEKKKQEEKKTKFENLCKIMKDMLEKK) adopt a coiled-coil conformation. Residues 314–334 (EMPPLRGGDDTSRMEEVGGSG) form a disordered region. Positions 320–334 (GGDDTSRMEEVGGSG) are enriched in basic and acidic residues. The TPR repeat-binding motif lies at 327 to 331 (MEEVG).

It belongs to the heat shock protein 90 family. In terms of assembly, homodimer.

Its subcellular location is the cytoplasm. Putative molecular chaperone that may promote the maturation, structural maintenance and proper regulation of specific target proteins. The chain is Putative heat shock protein HSP 90-alpha A5 (HSP90AA5P) from Homo sapiens (Human).